The sequence spans 132 residues: Small ribosomal subunit protein eS12 (132 aa).

The residue at position 2 (alanine 2) is an N-acetylalanine. Lysine 129 carries the N6-succinyllysine modification.

The protein belongs to the eukaryotic ribosomal protein eS12 family. Part of the small subunit (SSU) processome, composed of more than 70 proteins and the RNA chaperone small nucleolar RNA (snoRNA) U3. Subunit of the 40S ribosomal complex.

The protein localises to the nucleus. It is found in the nucleolus. Its function is as follows. Part of the small subunit (SSU) processome, first precursor of the small eukaryotic ribosomal subunit. During the assembly of the SSU processome in the nucleolus, many ribosome biogenesis factors, an RNA chaperone and ribosomal proteins associate with the nascent pre-rRNA and work in concert to generate RNA folding, modifications, rearrangements and cleavage as well as targeted degradation of pre-ribosomal RNA by the RNA exosome. Subunit of the 40S ribosomal complex. This Rattus norvegicus (Rat) protein is Small ribosomal subunit protein eS12 (Rps12).